A 369-amino-acid chain; its full sequence is Probable dual-specificity RNA methyltransferase RlmN (369 aa).

The active-site Proton acceptor is Glu108. One can recognise a Radical SAM core domain in the interval 114–352; it reads YPDRATLCIS…CTVRDTKGQE (239 aa). A disulfide bridge connects residues Cys121 and Cys357. The [4Fe-4S] cluster site is built by Cys128, Cys132, and Cys135. S-adenosyl-L-methionine is bound by residues 178–179, Ser212, 235–237, and Asn314; these read GE and SLH. The S-methylcysteine intermediate role is filled by Cys357.

The protein belongs to the radical SAM superfamily. RlmN family. The cofactor is [4Fe-4S] cluster.

The protein localises to the cytoplasm. The enzyme catalyses adenosine(2503) in 23S rRNA + 2 reduced [2Fe-2S]-[ferredoxin] + 2 S-adenosyl-L-methionine = 2-methyladenosine(2503) in 23S rRNA + 5'-deoxyadenosine + L-methionine + 2 oxidized [2Fe-2S]-[ferredoxin] + S-adenosyl-L-homocysteine. It carries out the reaction adenosine(37) in tRNA + 2 reduced [2Fe-2S]-[ferredoxin] + 2 S-adenosyl-L-methionine = 2-methyladenosine(37) in tRNA + 5'-deoxyadenosine + L-methionine + 2 oxidized [2Fe-2S]-[ferredoxin] + S-adenosyl-L-homocysteine. Specifically methylates position 2 of adenine 2503 in 23S rRNA and position 2 of adenine 37 in tRNAs. This chain is Probable dual-specificity RNA methyltransferase RlmN, found in Corynebacterium efficiens (strain DSM 44549 / YS-314 / AJ 12310 / JCM 11189 / NBRC 100395).